Consider the following 139-residue polypeptide: D-ribose pyranase (139 aa).

Residue histidine 20 is the Proton donor of the active site. Substrate is bound by residues aspartate 28, histidine 106, and 128-130 (YAN).

The protein belongs to the RbsD / FucU family. RbsD subfamily. As to quaternary structure, homodecamer.

It localises to the cytoplasm. The catalysed reaction is beta-D-ribopyranose = beta-D-ribofuranose. It functions in the pathway carbohydrate metabolism; D-ribose degradation; D-ribose 5-phosphate from beta-D-ribopyranose: step 1/2. Catalyzes the interconversion of beta-pyran and beta-furan forms of D-ribose. This Aliivibrio salmonicida (strain LFI1238) (Vibrio salmonicida (strain LFI1238)) protein is D-ribose pyranase.